The primary structure comprises 497 residues: Probable cytosol aminopeptidase (497 aa).

Mn(2+)-binding residues include Lys-267 and Asp-272. Residue Lys-279 is part of the active site. Positions 290, 349, and 351 each coordinate Mn(2+). Arg-353 is an active-site residue.

Belongs to the peptidase M17 family. Mn(2+) serves as cofactor.

It localises to the cytoplasm. It catalyses the reaction Release of an N-terminal amino acid, Xaa-|-Yaa-, in which Xaa is preferably Leu, but may be other amino acids including Pro although not Arg or Lys, and Yaa may be Pro. Amino acid amides and methyl esters are also readily hydrolyzed, but rates on arylamides are exceedingly low.. The enzyme catalyses Release of an N-terminal amino acid, preferentially leucine, but not glutamic or aspartic acids.. Its function is as follows. Presumably involved in the processing and regular turnover of intracellular proteins. Catalyzes the removal of unsubstituted N-terminal amino acids from various peptides. This Nitrosomonas europaea (strain ATCC 19718 / CIP 103999 / KCTC 2705 / NBRC 14298) protein is Probable cytosol aminopeptidase.